Here is a 310-residue protein sequence, read N- to C-terminus: Ribosomal RNA small subunit methyltransferase H (310 aa).

S-adenosyl-L-methionine is bound by residues 32–34, Asp51, Phe78, Asp99, and Gln106; that span reads AGH. The tract at residues 290–310 is disordered; the sequence is GELEDNRRSRSAKLRVAEKQK.

This sequence belongs to the methyltransferase superfamily. RsmH family.

Its subcellular location is the cytoplasm. The catalysed reaction is cytidine(1402) in 16S rRNA + S-adenosyl-L-methionine = N(4)-methylcytidine(1402) in 16S rRNA + S-adenosyl-L-homocysteine + H(+). Its function is as follows. Specifically methylates the N4 position of cytidine in position 1402 (C1402) of 16S rRNA. The protein is Ribosomal RNA small subunit methyltransferase H of Exiguobacterium sp. (strain ATCC BAA-1283 / AT1b).